We begin with the raw amino-acid sequence, 1169 residues long: Flocculation protein FLO10 (1169 aa).

The N-terminal stretch at 1–24 (MPVAARYIFLTGLFLLSVANVALG) is a signal peptide. The 161-residue stretch at 111–271 (PVKRGVKLCS…GTEVNDDFEG (161 aa)) folds into the PA14 domain. N-linked (GlcNAc...) asparagine glycosylation is found at N122, N157, and N279. A run of 10 repeats spans residues 303–326 (SSWS…VTPY), 330–356 (SSWS…YVTS), 357–383 (SSSS…YVSS), 384–419 (STAA…YVTS), 420–446 (SSWS…YVSS), 447–482 (STAA…YVTS), 483–509 (SSSS…YVSS), 510–545 (STAA…YVTS), 546–572 (SSWS…YVSS), and 573–608 (STAA…YATS). Positions 303–572 (SSWSSSEVCT…TSYVTPYVSS (270 aa)) are 6 X 27 AA approximate repeats, Ser/Thr-rich. The tract at residues 384 to 608 (STAAANYTSS…TSTSTPYATS (225 aa)) is 4 X 36 AA approximate repeats, Ser/Thr-rich. N-linked (GlcNAc...) asparagine glycosylation occurs at N389. N452 carries an N-linked (GlcNAc...) asparagine glycan. N515 carries N-linked (GlcNAc...) asparagine glycosylation. N-linked (GlcNAc...) asparagine glycans are attached at residues N578, N656, and N686. The span at 798 to 819 (TKVSSSESSESHRTSPTTSSES) shows a compositional bias: low complexity. 3 disordered regions span residues 798-837 (TKVS…SSFS), 856-920 (TPSS…SRDR), and 1070-1107 (RNNN…EAVS). The span at 856 to 884 (TPSSPISTVAPRSTGLNSQTESTNSSKET) shows a compositional bias: polar residues. An N-linked (GlcNAc...) asparagine glycan is attached at N879. The span at 886–902 (SSENSASVMPSSSATSP) shows a compositional bias: low complexity. The span at 906–916 (KVTSDETSSGF) shows a compositional bias: polar residues. Low complexity predominate over residues 1077–1107 (TSGTTSIETHTTTTSNASENSDNVSASEAVS). N-linked (GlcNAc...) asparagine glycosylation is found at N1092 and N1099. G1146 carries the GPI-anchor amidated glycine lipid modification. Residues 1147-1169 (IANHLLTNSGISIFIASLLLAIV) constitute a propeptide, removed in mature form.

This sequence belongs to the flocculin family. Extensively O-glycosylated. In terms of processing, the GPI-anchor is attached to the protein in the endoplasmic reticulum and serves to target the protein to the cell surface. There, the glucosamine-inositol phospholipid moiety is cleaved off and the GPI-modified mannoprotein is covalently attached via its lipidless GPI glycan remnant to the 1,6-beta-glucan of the outer cell wall layer.

It is found in the secreted. The protein localises to the cell wall. Its subcellular location is the membrane. Its function is as follows. Cell wall protein that participates directly in adhesive cell-cell interactions during yeast flocculation, a reversible, asexual and Ca(2+)-dependent process in which cells adhere to form aggregates (flocs) consisting of thousands of cells. The lectin-like protein sticks out of the cell wall of flocculent cells and selectively binds mannose residues in the cell walls of adjacent cells. Activity is inhibited by mannose, glucose, maltose and sucrose. Also involved in cell-substrate adhesion, haploid invasive growth and diploid pseudohyphae formation. The sequence is that of Flocculation protein FLO10 (FLO10) from Saccharomyces cerevisiae (strain ATCC 204508 / S288c) (Baker's yeast).